The sequence spans 391 residues: Putative F-box protein At1g47730 (391 aa).

A compositionally biased stretch (basic and acidic residues) spans 1-12 (MEQREEKTENIQ). The disordered stretch occupies residues 1–25 (MEQREEKTENIQRKRSRGKSSSSSL). One can recognise an F-box domain in the interval 19–68 (KSSSSSLPLDLTSEIFSRLPAKSVVRFRCVSKLWSSITTAPYFTNSFETR).

This chain is Putative F-box protein At1g47730, found in Arabidopsis thaliana (Mouse-ear cress).